A 175-amino-acid chain; its full sequence is Mitochondrial inner membrane protease subunit 2 (175 aa).

The chain crosses the membrane as a helical span at residues 19 to 37 (FFVAVPVAVTFLDRVACVA). Active-site residues include S43 and K91.

The protein belongs to the peptidase S26 family. IMP2 subfamily. In terms of assembly, heterodimer of 2 subunits, IMMPL1 and IMMPL2.

It is found in the mitochondrion inner membrane. Catalyzes the removal of transit peptides required for the targeting of proteins from the mitochondrial matrix, across the inner membrane, into the inter-membrane space. Known to process the nuclear encoded protein DIABLO. This chain is Mitochondrial inner membrane protease subunit 2 (Immp2l), found in Mus musculus (Mouse).